A 173-amino-acid polypeptide reads, in one-letter code: Regulator of ribonuclease activity A (173 aa).

It belongs to the RraA family. Homotrimer. Binds to both RNA-binding sites in the C-terminal region of Rne and to RhlB.

The protein resides in the cytoplasm. In terms of biological role, globally modulates RNA abundance by binding to RNase E (Rne) and regulating its endonucleolytic activity. Can modulate Rne action in a substrate-dependent manner by altering the composition of the degradosome. Modulates RNA-binding and helicase activities of the degradosome. The protein is Regulator of ribonuclease activity A of Vibrio vulnificus (strain CMCP6).